Reading from the N-terminus, the 279-residue chain is Putative pyruvate, phosphate dikinase regulatory protein (279 aa).

Gly-152–Ser-159 contacts ADP.

Belongs to the pyruvate, phosphate/water dikinase regulatory protein family. PDRP subfamily.

The enzyme catalyses N(tele)-phospho-L-histidyl/L-threonyl-[pyruvate, phosphate dikinase] + ADP = N(tele)-phospho-L-histidyl/O-phospho-L-threonyl-[pyruvate, phosphate dikinase] + AMP + H(+). It catalyses the reaction N(tele)-phospho-L-histidyl/O-phospho-L-threonyl-[pyruvate, phosphate dikinase] + phosphate + H(+) = N(tele)-phospho-L-histidyl/L-threonyl-[pyruvate, phosphate dikinase] + diphosphate. Its function is as follows. Bifunctional serine/threonine kinase and phosphorylase involved in the regulation of the pyruvate, phosphate dikinase (PPDK) by catalyzing its phosphorylation/dephosphorylation. The polypeptide is Putative pyruvate, phosphate dikinase regulatory protein (Anaplasma marginale (strain Florida)).